Consider the following 512-residue polypeptide: Glutathione-binding protein GsiB (512 aa).

An N-terminal signal peptide occupies residues 1–26 (MTQFITHKWLAALGLASSIAAFPALA).

It belongs to the bacterial solute-binding protein 5 family. In terms of assembly, the complex is composed of two ATP-binding proteins (GsiA), two transmembrane proteins (GsiC and GsiD) and a solute-binding protein (GsiB).

It localises to the periplasm. Its function is as follows. Part of the ABC transporter complex GsiABCD involved in glutathione import. Binds glutathione. This Salmonella paratyphi A (strain ATCC 9150 / SARB42) protein is Glutathione-binding protein GsiB.